Reading from the N-terminus, the 238-residue chain is RAD9, HUS1, RAD1-interacting nuclear orphan protein 1 (238 aa).

Basic residues predominate over residues 1-10 (MPPRKKRRQP). The interval 1–31 (MPPRKKRRQPSQKAPLLFHQQPLEGPKHSCA) is disordered. At S51 the chain carries Phosphoserine; by PLK1. An RAD1-binding motif motif is present at residues 55 to 61 (SWVSPDF). The tract at residues 74–105 (KHQNRARHSSRKPTTSKFPHLTFESPQSSSSE) is disordered. Residues 75 to 84 (HQNRARHSSR) show a composition bias toward basic residues. Positions 125 to 132 (RRPLVPVL) match the D-box motif. The KEN box motif lies at 174-178 (QKENS).

As to quaternary structure, interacts (when phosphorylated by PLK1) with POLQ; promoting POLQ recruitment to DNA damage sites. Interacts with RAD1; interaction is direct and promotes association with the 9-1-1 (RAD9-RAD1-HUS1) complex. Interacts with RAD18. Interacts with TOPBP1. Interacts with UBE2N. Post-translationally, phosphorylated at Ser-51 by PLK1, promoting interaction with polymerase theta (POLQ). Ubiquitinated and degraded by the APC/C complex upon mitotic exit. In terms of tissue distribution, weakly expressed in testis, prostate, ovary, thymus and small intestine. Expressed strongly in breast cancer cells.

It is found in the nucleus. The protein resides in the chromosome. Its function is as follows. Involved in microhomology-mediated end-joining (MMEJ) DNA repair by promoting recruitment of polymerase theta (POLQ) to DNA damage sites during mitosis. MMEJ is an alternative non-homologous end-joining (NHEJ) machinery that takes place during mitosis to repair double-strand breaks in DNA that originate in S-phase. Accumulates in M-phase; following phosphorylation by PLK1, interacts with POLQ, enabling its recruitment to double-strand breaks for subsequent repair. Also involved in the DNA damage response (DDR) signaling in response to genotoxic stresses such as ionizing radiation (IR) during the S phase. Recruited to sites of DNA damage through interaction with the 9-1-1 cell-cycle checkpoint response complex and TOPBP1 in a ATR-dependent manner. Required for the progression of the G1 to S phase transition. Plays a role in the stimulation of CHEK1 phosphorylation. The sequence is that of RAD9, HUS1, RAD1-interacting nuclear orphan protein 1 from Homo sapiens (Human).